The primary structure comprises 557 residues: Fanconi anemia group C protein homolog (557 aa).

In terms of assembly, belongs to the multisubunit FA complex composed of FANCA, FANCB, FANCC, FANCE, FANCF, FANCG, FANCL/PHF9 and FANCM. This complex may also include HSP70. Interacts with ZBTB32. Upon IFNG induction, interacts with STAT1. Interacts with CDK1. Interacts with EIF2AK2.

The protein resides in the nucleus. It is found in the cytoplasm. In terms of biological role, DNA repair protein that may operate in a postreplication repair or a cell cycle checkpoint function. May be implicated in interstrand DNA cross-link repair and in the maintenance of normal chromosome stability. Upon IFNG induction, may facilitate STAT1 activation by recruiting STAT1 to IFNGR1. This is Fanconi anemia group C protein homolog (Fancc) from Rattus norvegicus (Rat).